The primary structure comprises 634 residues: 1,4-alpha-glucan branching enzyme GlgB (634 aa).

The active-site Nucleophile is the Asp-305. Glu-357 acts as the Proton donor in catalysis.

It belongs to the glycosyl hydrolase 13 family. GlgB subfamily. Monomer.

It carries out the reaction Transfers a segment of a (1-&gt;4)-alpha-D-glucan chain to a primary hydroxy group in a similar glucan chain.. It functions in the pathway glycan biosynthesis; glycogen biosynthesis. In terms of biological role, catalyzes the formation of the alpha-1,6-glucosidic linkages in glycogen by scission of a 1,4-alpha-linked oligosaccharide from growing alpha-1,4-glucan chains and the subsequent attachment of the oligosaccharide to the alpha-1,6 position. The polypeptide is 1,4-alpha-glucan branching enzyme GlgB (Lactiplantibacillus plantarum (strain ATCC BAA-793 / NCIMB 8826 / WCFS1) (Lactobacillus plantarum)).